Reading from the N-terminus, the 563-residue chain is NAD(P)H-quinone oxidoreductase chain 4 (563 aa).

15 consecutive transmembrane segments (helical) span residues 25–45 (FPWL…VPFI), 56–76 (WFAL…YLYG), 90–110 (VSWL…ISMP), 111–131 (LILL…PVTF), 133–153 (PKLF…VFAV), 157–177 (LLFF…LAIW), 189–209 (FIIY…AMGF), 230–250 (GFQL…LPIV), 264–284 (TAPV…YALM), 298–318 (FAPL…LTSF), 335–355 (MGFV…GAML), 356–376 (QMIS…ATYD), 397–417 (FALW…SGFV), 438–458 (IVIA…LLSM), and 485–505 (VYII…PRLM).

This sequence belongs to the complex I subunit 4 family.

It is found in the cellular thylakoid membrane. The catalysed reaction is a plastoquinone + NADH + (n+1) H(+)(in) = a plastoquinol + NAD(+) + n H(+)(out). The enzyme catalyses a plastoquinone + NADPH + (n+1) H(+)(in) = a plastoquinol + NADP(+) + n H(+)(out). NDH-1 shuttles electrons from NAD(P)H, via FMN and iron-sulfur (Fe-S) centers, to quinones in the respiratory chain. The immediate electron acceptor for the enzyme in this species is believed to be plastoquinone. Couples the redox reaction to proton translocation (for every two electrons transferred, four hydrogen ions are translocated across the cytoplasmic membrane), and thus conserves the redox energy in a proton gradient. The protein is NAD(P)H-quinone oxidoreductase chain 4 of Prochlorococcus marinus (strain MIT 9313).